The primary structure comprises 308 residues: Ornithine carbamoyltransferase (308 aa).

Carbamoyl phosphate contacts are provided by residues 56–59 (STRT), Gln-83, Arg-107, and 134–137 (HPCQ). L-ornithine contacts are provided by residues Asn-165, Asp-225, and 229–230 (SM). Carbamoyl phosphate-binding positions include 266 to 267 (CL) and Arg-294.

The protein belongs to the aspartate/ornithine carbamoyltransferase superfamily. OTCase family.

The protein resides in the cytoplasm. The enzyme catalyses carbamoyl phosphate + L-ornithine = L-citrulline + phosphate + H(+). Its pathway is amino-acid degradation; L-arginine degradation via ADI pathway; carbamoyl phosphate from L-arginine: step 2/2. Reversibly catalyzes the transfer of the carbamoyl group from carbamoyl phosphate (CP) to the N(epsilon) atom of ornithine (ORN) to produce L-citrulline. This Cereibacter sphaeroides (strain KD131 / KCTC 12085) (Rhodobacter sphaeroides) protein is Ornithine carbamoyltransferase.